We begin with the raw amino-acid sequence, 67 residues long: Large ribosomal subunit protein uL30 (67 aa).

It belongs to the universal ribosomal protein uL30 family. In terms of assembly, part of the 50S ribosomal subunit.

The protein is Large ribosomal subunit protein uL30 of Hamiltonella defensa subsp. Acyrthosiphon pisum (strain 5AT).